Here is a 240-residue protein sequence, read N- to C-terminus: Chloroplastic group IIB intron splicing facilitator CRS2-B, chloroplastic (240 aa).

This sequence belongs to the PTH family. CRS2 subfamily. Part of large ribonucleo-protein complexes that include group IIB introns and either CAF1 or CAF2.

Its subcellular location is the plastid. It is found in the chloroplast stroma. Functionally, required for the splicing of group IIB introns in chloroplasts. The chain is Chloroplastic group IIB intron splicing facilitator CRS2-B, chloroplastic (CRS2B) from Arabidopsis thaliana (Mouse-ear cress).